Here is an 84-residue protein sequence, read N- to C-terminus: Translational regulator CsrA (84 aa).

Belongs to the CsrA/RsmA family. In terms of assembly, homodimer; the beta-strands of each monomer intercalate to form a hydrophobic core, while the alpha-helices form wings that extend away from the core.

It localises to the cytoplasm. Functionally, a translational regulator that binds mRNA to regulate translation initiation and/or mRNA stability. Usually binds in the 5'-UTR at or near the Shine-Dalgarno sequence preventing ribosome-binding, thus repressing translation. Its main target seems to be the major flagellin gene, while its function is anatagonized by FliW. The polypeptide is Translational regulator CsrA (Leptospira borgpetersenii serovar Hardjo-bovis (strain JB197)).